The following is a 212-amino-acid chain: ER lumen protein-retaining receptor (212 aa).

The Lumenal portion of the chain corresponds to 1–2; it reads MN. A helical membrane pass occupies residues 3-21; sequence IFRFAGDLSHVFAIIILLL. Topologically, residues 22 to 35 are cytoplasmic; the sequence is KIWKTRSCAGISGK. The helical transmembrane segment at 36–53 threads the bilayer; it reads SQILFAVVYLTRYLDLFT. Over 54–61 the chain is Lumenal; the sequence is TYVSLYNS. Residues 62-80 form a helical membrane-spanning segment; the sequence is VMKVLFLATSGATVYLMYV. Topologically, residues 81-96 are cytoplasmic; it reads KFKATYDHNHDSFRIE. Residues 97–110 form a helical membrane-spanning segment; the sequence is FLLVPCALLSLVIN. Topologically, residues 111 to 117 are lumenal; the sequence is HEFTVME. A helical membrane pass occupies residues 118–137; that stretch reads VLWTFSIYLESVAILPQLFL. Residues 138–149 are Cytoplasmic-facing; the sequence is VSRTGEAESITS. Residues 150-168 traverse the membrane as a helical segment; the sequence is HYLFALGSYRALYLLNWVY. Topologically, residues 169–178 are lumenal; sequence RYMVESHYDL. The helical transmembrane segment at 179–199 threads the bilayer; sequence IAIFAGVVQTVLYCDFFYLYI. Over 200–212 the chain is Cytoplasmic; that stretch reads TKVLKGKKLQLPA.

The protein belongs to the ERD2 family.

It is found in the endoplasmic reticulum membrane. Its function is as follows. Required for the retention of luminal endoplasmic reticulum proteins. Determines the specificity of the luminal ER protein retention system. Also required for normal vesicular traffic through the Golgi. The sequence is that of ER lumen protein-retaining receptor (KdelR) from Drosophila melanogaster (Fruit fly).